We begin with the raw amino-acid sequence, 222 residues long: Peptide methionine sulfoxide reductase MsrA 1 (222 aa).

The active site involves Cys-57.

The protein belongs to the MsrA Met sulfoxide reductase family.

The enzyme catalyses L-methionyl-[protein] + [thioredoxin]-disulfide + H2O = L-methionyl-(S)-S-oxide-[protein] + [thioredoxin]-dithiol. It catalyses the reaction [thioredoxin]-disulfide + L-methionine + H2O = L-methionine (S)-S-oxide + [thioredoxin]-dithiol. Its function is as follows. Has an important function as a repair enzyme for proteins that have been inactivated by oxidation. Catalyzes the reversible oxidation-reduction of methionine sulfoxide in proteins to methionine. In Synechocystis sp. (strain ATCC 27184 / PCC 6803 / Kazusa), this protein is Peptide methionine sulfoxide reductase MsrA 1 (msrA1).